Here is a 646-residue protein sequence, read N- to C-terminus: Cysteine-rich receptor-like protein kinase 37 (646 aa).

Residues 1-26 (MGKSCVVTSSFSLLLLFLQTLKYVHA) form the signal peptide. Gnk2-homologous domains follow at residues 27–132 (GFIC…NHST) and 142–252 (TINP…LYPY). Over 27-287 (GFICYGDFFN…RDEKSFQGSN (261 aa)) the chain is Extracellular. N-linked (GlcNAc...) asparagine glycosylation is found at N62, N129, N169, and N180. The helical transmembrane segment at 288-308 (IAIIVVPSVINLIIFVVLIFS) threads the bilayer. Over 309–646 (WKRKQSHTII…LTRPSLSLGH (338 aa)) the chain is Cytoplasmic. The Protein kinase domain occupies 345-626 (FSLENKLGQG…LFWLERHATI (282 aa)). ATP contacts are provided by residues 351 to 359 (LGQGGFGSV) and K373. Y418 is modified (phosphotyrosine). The Proton acceptor role is filled by D470. Residue S474 is modified to Phosphoserine. T510 carries the post-translational modification Phosphothreonine. Residue Y518 is modified to Phosphotyrosine.

Belongs to the protein kinase superfamily. Ser/Thr protein kinase family. CRK subfamily.

The protein resides in the membrane. It catalyses the reaction L-seryl-[protein] + ATP = O-phospho-L-seryl-[protein] + ADP + H(+). The enzyme catalyses L-threonyl-[protein] + ATP = O-phospho-L-threonyl-[protein] + ADP + H(+). This Arabidopsis thaliana (Mouse-ear cress) protein is Cysteine-rich receptor-like protein kinase 37 (CRK37).